The following is a 78-amino-acid chain: Acyl carrier protein (78 aa).

Residues 2–77 enclose the Carrier domain; that stretch reads SDIEARVKKI…NAIDYANTHQ (76 aa). An O-(pantetheine 4'-phosphoryl)serine modification is found at Ser-37.

It belongs to the acyl carrier protein (ACP) family. In terms of processing, 4'-phosphopantetheine is transferred from CoA to a specific serine of apo-ACP by AcpS. This modification is essential for activity because fatty acids are bound in thioester linkage to the sulfhydryl of the prosthetic group.

The protein localises to the cytoplasm. It functions in the pathway lipid metabolism; fatty acid biosynthesis. In terms of biological role, carrier of the growing fatty acid chain in fatty acid biosynthesis. The polypeptide is Acyl carrier protein (Comamonas testosteroni (Pseudomonas testosteroni)).